Consider the following 236-residue polypeptide: 2-C-methyl-D-erythritol 4-phosphate cytidylyltransferase (236 aa).

This sequence belongs to the IspD/TarI cytidylyltransferase family. IspD subfamily. Homodimer.

The catalysed reaction is 2-C-methyl-D-erythritol 4-phosphate + CTP + H(+) = 4-CDP-2-C-methyl-D-erythritol + diphosphate. It functions in the pathway isoprenoid biosynthesis; isopentenyl diphosphate biosynthesis via DXP pathway; isopentenyl diphosphate from 1-deoxy-D-xylulose 5-phosphate: step 2/6. Catalyzes the formation of 4-diphosphocytidyl-2-C-methyl-D-erythritol from CTP and 2-C-methyl-D-erythritol 4-phosphate (MEP). This is 2-C-methyl-D-erythritol 4-phosphate cytidylyltransferase from Salmonella schwarzengrund (strain CVM19633).